The sequence spans 86 residues: Large ribosomal subunit protein bL27 (86 aa).

The disordered stretch occupies residues 1–26; that stretch reads MATKKAGGSSRNGRDSAGRRLGVKKS.

This sequence belongs to the bacterial ribosomal protein bL27 family.

The chain is Large ribosomal subunit protein bL27 from Rickettsia akari (strain Hartford).